A 247-amino-acid polypeptide reads, in one-letter code: Triosephosphate isomerase (247 aa).

Substrate is bound by residues asparagine 10 and lysine 12. Histidine 94 functions as the Electrophile in the catalytic mechanism. Glutamate 164 serves as the catalytic Proton acceptor.

It belongs to the triosephosphate isomerase family. As to quaternary structure, homodimer.

Its subcellular location is the cytoplasm. It catalyses the reaction D-glyceraldehyde 3-phosphate = dihydroxyacetone phosphate. The enzyme catalyses dihydroxyacetone phosphate = methylglyoxal + phosphate. It participates in carbohydrate biosynthesis; gluconeogenesis. The protein operates within carbohydrate degradation; glycolysis; D-glyceraldehyde 3-phosphate from glycerone phosphate: step 1/1. Its function is as follows. Triosephosphate isomerase is an extremely efficient metabolic enzyme that catalyzes the interconversion between dihydroxyacetone phosphate (DHAP) and D-glyceraldehyde-3-phosphate (G3P) in glycolysis and gluconeogenesis. Functionally, it is also responsible for the non-negligible production of methylglyoxal a reactive cytotoxic side-product that modifies and can alter proteins, DNA and lipids. This chain is Triosephosphate isomerase (tpi-1), found in Caenorhabditis elegans.